The primary structure comprises 460 residues: MATRGRPGAKQVADHSVSDGGEQRRIPQKPPGPERCDVCSAVSAAGAAADLIDVAPLEEDLTKEPQQIVVTIMSNDPAKVCLKVDPALHYRNVELEPYRFLGRGGYGSVFYSRRANVAVKALTHGASFRWELAVSLIVSSAARRQELSDIAKHFLQIYAFSSVEKIIVMEYIRHDLRTYLDEHCKPVTQSALDALVREFRGLAKALAFFHIECGLAHLDVKQNNILVNCDPRTGDPVRMVLADFSLAAINGNSFLNKCCMVCPGRPGVTGVHIIDTEDAVNSLPSNNILLFRMSRRPPEFLLDYCNGVGPRCGEVMGAMTTFAMDVFALGSVVHEVLLLCLSRVLGRDPFPHMTCTDEPMDHKTILSLLAYRLALTDYLSQSWSSAGFVNPAGTREGISSALQWECMRDMFLASAEAWTRTVRRKMNGARSPSMFADILDLSILLCHFDPDVRRTVSALA.

The disordered stretch occupies residues 1–37 (MATRGRPGAKQVADHSVSDGGEQRRIPQKPPGPERCD). The span at 12-25 (VADHSVSDGGEQRR) shows a compositional bias: basic and acidic residues. The region spanning 95–460 (LEPYRFLGRG…DVRRTVSALA (366 aa)) is the Protein kinase domain. Residues 101-109 (LGRGGYGSV) and Lys120 contribute to the ATP site. The active-site Proton acceptor is Asp219.

It belongs to the protein kinase superfamily. Ser/Thr protein kinase family. In terms of processing, autophosphorylated.

It localises to the virion tegument. The protein localises to the host nucleus. The catalysed reaction is L-seryl-[protein] + ATP = O-phospho-L-seryl-[protein] + ADP + H(+). It carries out the reaction L-threonyl-[protein] + ATP = O-phospho-L-threonyl-[protein] + ADP + H(+). Functionally, multifunctional serine/threonine kinase that plays a role in several processes including egress of virus particles from the nucleus, modulation of the actin cytoskeleton and regulation of viral and cellular gene expression. Regulates the nuclear localization of viral envelopment factors UL34 and UL31 homologs, by phosphorylating the US3 kinase homolog, indicating a role in nuclear egress. Disrupts host nuclear lamins, including LMNA and LMNB1. Phosphorylates the viral Fc receptor composed of glycoproteins E (gE) and I (gI). Phosphorylation of glycoprotein E (gE) by UL13 homolog alters its subcellular localization, from the host early endosome to the plasma membrane. Participates in the transcriptional regulation of cellular and viral mRNAs mainly by phosphorylating the viral transcriptional regulator ICP22 homolog. This Amazona oratrix (yellow-headed parrot) protein is Serine/threonine-protein kinase UL13 (UL13).